A 397-amino-acid chain; its full sequence is Serpin-Z7 (397 aa).

Alanine 2 carries the N-acetylalanine modification. Positions 344 to 368 (GTKAGAATGDVIVDRSLPIRMDFVA) are RCL.

This sequence belongs to the serpin family. In terms of tissue distribution, highly expressed in endosperm, at intermediate level in embryo and at lower levels in roots.

In terms of biological role, inhibits chymotrypsin in vitro. This Hordeum vulgare (Barley) protein is Serpin-Z7 (PAZ7).